Consider the following 301-residue polypeptide: Cuticle collagen 1 (301 aa).

The N-terminal stretch at 1-37 (METDGRLKAYKFVAYAAVGFSIAAVASVLLTLPMVYS) is a signal peptide. Positions 79–82 (RTTR) are furin-like endopeptidase recognition region. Triple-helical region stretches follow at residues 105–134 (GPPG…PGKP), 153–179 (GPPG…PGTD), 183–209 (GSPG…PGTP), and 218–283 (GAPG…KGIC). Residues 109–284 (PAGAPGKPGK…GTPGEKGICP (176 aa)) form a disordered region. 2 stretches are compositionally biased toward pro residues: residues 131–164 (PGKP…PGAP) and 184–193 (SPGPRGPPGP). The segment covering 194–210 (AGEAGAPGPAGEPGTPA) has biased composition (low complexity). Residues 226–258 (SGPPGPPGPPGAPGNDGPPGPPGPKGAPGPDGP) are compositionally biased toward pro residues.

Belongs to the cuticular collagen family. As to quaternary structure, collagen polypeptide chains are complexed within the cuticle by disulfide bonds and other types of covalent cross-links.

The protein localises to the secreted. It localises to the extracellular space. In terms of biological role, secreted collagen that forms part of the nematode cuticle, which functions as an exoskeleton and a barrier to protect the worm from its environment. Secretion and subsequent incorporation into the cuticle is likely mediated by bli-4, which probably cleaves at the N-terminal consensus furin cleavage site. This is Cuticle collagen 1 (sqt-3) from Caenorhabditis elegans.